Reading from the N-terminus, the 243-residue chain is 23S rRNA (guanosine-2'-O-)-methyltransferase RlmB (243 aa).

S-adenosyl-L-methionine-binding residues include glycine 196, isoleucine 216, and leucine 225.

Belongs to the class IV-like SAM-binding methyltransferase superfamily. RNA methyltransferase TrmH family. RlmB subfamily. Homodimer.

The protein localises to the cytoplasm. It catalyses the reaction guanosine(2251) in 23S rRNA + S-adenosyl-L-methionine = 2'-O-methylguanosine(2251) in 23S rRNA + S-adenosyl-L-homocysteine + H(+). In terms of biological role, specifically methylates the ribose of guanosine 2251 in 23S rRNA. The chain is 23S rRNA (guanosine-2'-O-)-methyltransferase RlmB from Salmonella typhi.